Here is a 297-residue protein sequence, read N- to C-terminus: Urease accessory protein UreD (297 aa).

This sequence belongs to the UreD family. In terms of assembly, ureD, UreF and UreG form a complex that acts as a GTP-hydrolysis-dependent molecular chaperone, activating the urease apoprotein by helping to assemble the nickel containing metallocenter of UreC. The UreE protein probably delivers the nickel.

The protein resides in the cytoplasm. Required for maturation of urease via the functional incorporation of the urease nickel metallocenter. The protein is Urease accessory protein UreD of Anaeromyxobacter sp. (strain Fw109-5).